A 187-amino-acid chain; its full sequence is Peptide deformylase (187 aa).

Fe cation is bound by residues Cys-114 and His-157. Residue Glu-158 is part of the active site. Position 161 (His-161) interacts with Fe cation.

It belongs to the polypeptide deformylase family. Requires Fe(2+) as cofactor.

It carries out the reaction N-terminal N-formyl-L-methionyl-[peptide] + H2O = N-terminal L-methionyl-[peptide] + formate. Its function is as follows. Removes the formyl group from the N-terminal Met of newly synthesized proteins. Requires at least a dipeptide for an efficient rate of reaction. N-terminal L-methionine is a prerequisite for activity but the enzyme has broad specificity at other positions. The chain is Peptide deformylase from Enterococcus faecalis (strain ATCC 700802 / V583).